A 254-amino-acid chain; its full sequence is 5'/3'-nucleotidase SurE (254 aa).

Positions 8, 9, 39, and 92 each coordinate a divalent metal cation.

The protein belongs to the SurE nucleotidase family. A divalent metal cation serves as cofactor.

The protein resides in the cytoplasm. The catalysed reaction is a ribonucleoside 5'-phosphate + H2O = a ribonucleoside + phosphate. The enzyme catalyses a ribonucleoside 3'-phosphate + H2O = a ribonucleoside + phosphate. It carries out the reaction [phosphate](n) + H2O = [phosphate](n-1) + phosphate + H(+). Functionally, nucleotidase with a broad substrate specificity as it can dephosphorylate various ribo- and deoxyribonucleoside 5'-monophosphates and ribonucleoside 3'-monophosphates with highest affinity to 3'-AMP. Also hydrolyzes polyphosphate (exopolyphosphatase activity) with the preference for short-chain-length substrates (P20-25). Might be involved in the regulation of dNTP and NTP pools, and in the turnover of 3'-mononucleotides produced by numerous intracellular RNases (T1, T2, and F) during the degradation of various RNAs. This chain is 5'/3'-nucleotidase SurE, found in Edwardsiella ictaluri (strain 93-146).